Consider the following 585-residue polypeptide: MHAHNAATLTLRSLLNCVAREFPDHVRWLETQGHLRFMLTFPEGGGSLGLPAHYRSATGHHLFGEPVMLTDENGAKTVDAVEAISAVIERLEPSIAAKDGRVDLLNRTHSSRLLIEAALHARNGDLAALAGDEVSFVAAEQGLIAGHGIHPCPKSREGMTEAESRRYSPEFAAGFPLRWFAVESELFHTGHSQGSPSAEEWLKEAMGSDIDALKAPLPAGDFSLLPVHPWQADQMLKDPTVAALVAAGRMIDCGEAGKPWFPTSSVRTLYRPDASFMLKMSLGVGITNSVRVNLARELLRGDDMYRFRRHELWQDFSRSYPGLTLIPDPAFMGVKIDGALIDGLSVSMRENPFTGANADRNVSLLAAVCEHLPDRGSRLGALIRNRAHLERRPLDIVARDWFERFLTIFVRPIFGLYLRHGIAMEAHQQNIVVEIEHGYPIGLFYRDNQGFFHHERAHGALVEALPGFGEPSESVFGEEPVDERLLYYAFINSVLGMVGALGREGLVSETALLAMLRRELLRLEALEGANSGIVRKMLAPTLQCKANLKTRLARMDELVGPLETQSVYLQITNPLFETEKVLAHA.

This sequence belongs to the IucA/IucC family.

It participates in siderophore biosynthesis; rhizobactin biosynthesis. This Rhizobium meliloti (strain 1021) (Ensifer meliloti) protein is Rhizobactin siderophore biosynthesis protein RhbC (rhbC).